Reading from the N-terminus, the 123-residue chain is Large ribosomal subunit protein uL29 (123 aa).

Lys-19 is modified (N6-acetyllysine). A Glycyl lysine isopeptide (Lys-Gly) (interchain with G-Cter in SUMO2) cross-link involves residue Lys-25. Ser-29 is subject to Phosphoserine. Lys-43 carries the post-translational modification N6-acetyllysine.

Belongs to the universal ribosomal protein uL29 family. Component of the large ribosomal subunit.

The protein resides in the cytoplasm. Functionally, component of the large ribosomal subunit. The ribosome is a large ribonucleoprotein complex responsible for the synthesis of proteins in the cell. The chain is Large ribosomal subunit protein uL29 (RPL35) from Sus scrofa (Pig).